Reading from the N-terminus, the 391-residue chain is Uroporphyrinogen decarboxylase, chloroplastic (391 aa).

Residues 71–75 (RQAGR), Phe90, Ser120, Asp121, Tyr198, Ser253, and His368 contribute to the substrate site.

This sequence belongs to the uroporphyrinogen decarboxylase family. In terms of assembly, homodimer.

It localises to the plastid. The protein localises to the chloroplast. The enzyme catalyses uroporphyrinogen III + 4 H(+) = coproporphyrinogen III + 4 CO2. It participates in porphyrin-containing compound metabolism; protoporphyrin-IX biosynthesis; coproporphyrinogen-III from 5-aminolevulinate: step 4/4. Functionally, catalyzes the decarboxylation of four acetate groups of uroporphyrinogen-III to yield coproporphyrinogen-III. This chain is Uroporphyrinogen decarboxylase, chloroplastic (DCUP), found in Nicotiana tabacum (Common tobacco).